The following is a 379-amino-acid chain: Hydrogenase expression/formation protein HupD (379 aa).

Fe cation contacts are provided by Cys-36, Cys-64, and Cys-67.

The protein belongs to the HypD family.

This Azotobacter chroococcum mcd 1 protein is Hydrogenase expression/formation protein HupD (hupD).